The following is a 137-amino-acid chain: Large ribosomal subunit protein uL16 (137 aa).

This sequence belongs to the universal ribosomal protein uL16 family. Part of the 50S ribosomal subunit.

Its function is as follows. Binds 23S rRNA and is also seen to make contacts with the A and possibly P site tRNAs. This Mycoplasma mycoides subsp. mycoides SC (strain CCUG 32753 / NCTC 10114 / PG1) protein is Large ribosomal subunit protein uL16.